Consider the following 310-residue polypeptide: Polyprenyl transferase ntnF (310 aa).

The next 8 helical transmembrane spans lie at H30–I50, F63–I83, A110–G130, I154–V174, L185–A205, A230–A250, F255–L275, and I286–W306.

This sequence belongs to the UbiA prenyltransferase family. It depends on Mg(2+) as a cofactor.

It is found in the membrane. The protein operates within secondary metabolite biosynthesis; terpenoid biosynthesis. Functionally, olyprenyl transferase; part of the gene cluster that mediates the biosynthesis of the meroterpenoids nectripenoids A and B, as well as cochliquninone D and isocochliquninone E. The pathway probably begins with the HR-PKS ntnH that catalyzes two chain-extension steps to form a reduced triketide, which then primes the SAT domain in the NR-PKS ntnG to initiate three more cycles of extension to give a linear hexaketide corresponding to the polyketide part of nectripenoids. The FAD-dependent monooxygenase ntnJ then performs an oxidative decarboxylation at C11 of the ntnH/ntnG product, via an electrophilic aromatic hydroxylation with concomitant ipso-decarboxylation. The membrane-bound polyprenyl transferase ntnF then introduces a farnesyl group before the FAD-dependent monooxygenase ntnK functions as the first epoxidase on terminal C12'-C13' olefin, followed by a second epoxidation on C7'-C8' catalyzed by ntnA. The terpene cyclase/mutase ntnI then initiates the sequential tricyclic ring formation through protonation of the terminal epoxide and catalyzes the regioselective and stereoselective 6/6/6-tricyclic ring formation. The cytochrome P450 monooxygenase ntnM may then hydroxylate C1'. This Nectria sp protein is Polyprenyl transferase ntnF.